A 426-amino-acid chain; its full sequence is Multifunctional protein ADE2 (426 aa).

The interval 1 to 261 (MAPAASELKL…WVAERVELLL (261 aa)) is SAICAR synthetase. The AIR carboxylase stretch occupies residues 262–426 (KTKSQGRVVV…ADKKLRECTL (165 aa)).

In the N-terminal section; belongs to the SAICAR synthetase family. It in the C-terminal section; belongs to the AIR carboxylase family. Class II subfamily. In terms of assembly, homooctamer.

The enzyme catalyses 5-amino-1-(5-phospho-D-ribosyl)imidazole-4-carboxylate + L-aspartate + ATP = (2S)-2-[5-amino-1-(5-phospho-beta-D-ribosyl)imidazole-4-carboxamido]succinate + ADP + phosphate + 2 H(+). The catalysed reaction is 5-amino-1-(5-phospho-D-ribosyl)imidazole-4-carboxylate + H(+) = 5-amino-1-(5-phospho-beta-D-ribosyl)imidazole + CO2. Its pathway is purine metabolism; IMP biosynthesis via de novo pathway; 5-amino-1-(5-phospho-D-ribosyl)imidazole-4-carboxamide from 5-amino-1-(5-phospho-D-ribosyl)imidazole-4-carboxylate: step 1/2. It functions in the pathway purine metabolism; IMP biosynthesis via de novo pathway; 5-amino-1-(5-phospho-D-ribosyl)imidazole-4-carboxylate from 5-amino-1-(5-phospho-D-ribosyl)imidazole (carboxylase route): step 1/1. This is Multifunctional protein ADE2 (AIRC) from Gallus gallus (Chicken).